A 478-amino-acid chain; its full sequence is BTB/POZ domain-containing protein 17 (478 aa).

Positions 1–28 (MPRRGYSKPGSWGSFWAMLTLVGLVTHA) are cleaved as a signal peptide. N-linked (GlcNAc...) asparagine glycosylation is found at asparagine 61, asparagine 100, and asparagine 195. A BTB domain is found at 63 to 132 (SDVVLRVQAA…LYCGELTVLL (70 aa)). Positions 169–269 (AVGWYHYAVG…IPPAQLFQLQ (101 aa)) constitute a BACK domain.

The protein resides in the secreted. This Homo sapiens (Human) protein is BTB/POZ domain-containing protein 17 (BTBD17).